A 1020-amino-acid polypeptide reads, in one-letter code: Glycine dehydrogenase (decarboxylating), mitochondrial (1020 aa).

A mitochondrion-targeting transit peptide spans 1–35; the sequence is MQSCARAWGLRLGRGVGGGRRLAGGSGPCWAPRSR. The interval 21–46 is disordered; that stretch reads RLAGGSGPCWAPRSRDSSSGGGDSAA. An N6-acetyllysine mark is found at Lys-447, Lys-514, Lys-648, and Lys-664. At Lys-754 the chain carries N6-(pyridoxal phosphate)lysine.

The protein belongs to the GcvP family. Homodimer. Interacts with GCSH. The glycine cleavage system is composed of four proteins: P (GLDC), T (GCST), L (DLD) and H (GCSH). The cofactor is pyridoxal 5'-phosphate.

It localises to the mitochondrion. The catalysed reaction is N(6)-[(R)-lipoyl]-L-lysyl-[glycine-cleavage complex H protein] + glycine + H(+) = N(6)-[(R)-S(8)-aminomethyldihydrolipoyl]-L-lysyl-[glycine-cleavage complex H protein] + CO2. Stimulated by lipoic acid. Inhibited in presence of methylamine. Functionally, the glycine cleavage system catalyzes the degradation of glycine. The P protein (GLDC) binds the alpha-amino group of glycine through its pyridoxal phosphate cofactor; CO(2) is released and the remaining methylamine moiety is then transferred to the lipoamide cofactor of the H protein (GCSH). In Homo sapiens (Human), this protein is Glycine dehydrogenase (decarboxylating), mitochondrial.